We begin with the raw amino-acid sequence, 331 residues long: Glycerol-3-phosphate dehydrogenase [NAD(P)+] (331 aa).

NADPH is bound by residues Trp14, Arg34, and Lys107. The sn-glycerol 3-phosphate site is built by Lys107, Gly135, and Ser137. Residue Ala139 participates in NADPH binding. 5 residues coordinate sn-glycerol 3-phosphate: Lys190, Asp243, Ser253, Arg254, and Asn255. Catalysis depends on Lys190, which acts as the Proton acceptor. Arg254 is a binding site for NADPH. Positions 278 and 280 each coordinate NADPH.

The protein belongs to the NAD-dependent glycerol-3-phosphate dehydrogenase family.

The protein localises to the cytoplasm. It carries out the reaction sn-glycerol 3-phosphate + NAD(+) = dihydroxyacetone phosphate + NADH + H(+). It catalyses the reaction sn-glycerol 3-phosphate + NADP(+) = dihydroxyacetone phosphate + NADPH + H(+). The protein operates within membrane lipid metabolism; glycerophospholipid metabolism. Catalyzes the reduction of the glycolytic intermediate dihydroxyacetone phosphate (DHAP) to sn-glycerol 3-phosphate (G3P), the key precursor for phospholipid synthesis. The chain is Glycerol-3-phosphate dehydrogenase [NAD(P)+] from Caulobacter vibrioides (strain ATCC 19089 / CIP 103742 / CB 15) (Caulobacter crescentus).